A 250-amino-acid chain; its full sequence is Probable syntaxin-8B (250 aa).

At 1–213 (MGDYWLNEHD…NRRMETIKQN (213 aa)) the chain is on the cytoplasmic side. Residues 73–100 (EKELLRRKNKVESLISMKNQLNSTLDAA) adopt a coiled-coil conformation. The t-SNARE coiled-coil homology domain occupies 148 to 210 (QHIMREQDES…RNANRRMETI (63 aa)). Residues 214–234 (AGSTCMIVCIVILIILIVVLI) form a helical; Anchor for type IV membrane protein membrane-spanning segment. The Vesicular segment spans residues 235–250 (ATDSGCKIYNDPKHCP).

This sequence belongs to the syntaxin family.

It is found in the membrane. This chain is Probable syntaxin-8B (syn8B), found in Dictyostelium discoideum (Social amoeba).